A 114-amino-acid polypeptide reads, in one-letter code: Vacuolar morphogenesis protein 10 (114 aa).

The protein localises to the vacuole membrane. In terms of biological role, required for vacuolar fusion. Involved in the early steps of the fusion pathway. The polypeptide is Vacuolar morphogenesis protein 10 (VAM10) (Saccharomyces cerevisiae (strain ATCC 204508 / S288c) (Baker's yeast)).